Reading from the N-terminus, the 576-residue chain is Coilin (576 aa).

S105 is modified (phosphoserine). T122 bears the Phosphothreonine mark. Disordered regions lie at residues 125-330 (DCKY…CLMS) and 352-389 (RPGPGLSSQTAGAAGWRRSGSNGGGQAPGASPSVSLPA). Residues K127, K151, and K160 each participate in a glycyl lysine isopeptide (Lys-Gly) (interchain with G-Cter in SUMO2) cross-link. S184 is modified (phosphoserine; by VRK1 and VRK2). Glycyl lysine isopeptide (Lys-Gly) (interchain with G-Cter in SUMO2) cross-links involve residues K204 and K209. The segment covering 214-225 (QRCSSPKGSARN) has biased composition (polar residues). A 1-1 repeat occupies 223–226 (ARNS). Positions 223–271 (ARNSLVKAKRKGSVSVCSKESPSSSSESESCDESISDGPSKVTLEARNS) are 2 X 4 AA repeats of A-R-N-S. Residues 235–250 (SVSVCSKESPSSSSES) are compositionally biased toward low complexity. A phosphoserine mark is found at S248, S250, S256, S271, and S272. One copy of the 1-2 repeat lies at 268–271 (ARNS). Residues 270–285 (NSSEKLPTELSKEEPS) show a composition bias toward basic and acidic residues. Residues K274 and K281 each participate in a glycyl lysine isopeptide (Lys-Gly) (interchain with G-Cter in SUMO2) cross-link. T290 carries the post-translational modification Phosphothreonine. Residues K293 and K297 each participate in a glycyl lysine isopeptide (Lys-Gly) (interchain with G-Cter in SUMO2) cross-link. The residue at position 301 (S301) is a Phosphoserine. Positions 301-320 (SLTPSKGKTSGTTSSSSDSS) are enriched in low complexity. T303 is modified (phosphothreonine). The stretch at 386 to 389 (SLPA) is one 2-1 repeat. The tract at residues 386–520 (SLPASLGRGW…DIEILSSLPA (135 aa)) is 2 X 4 AA repeats of S-L-P-A. Residues 392–420 (GRGWGREENLFSWKGAKGRGMRGRGRGRG) form a required for interaction with SMN region. The residue at position 403 (S403) is a Phosphoserine. Repeat copies occupy residues 413-414 (RG), 415-416 (RG), 417-418 (RG), and 419-420 (RG). The interval 413 to 420 (RGRGRGRG) is 4 X 2 AA tandem repeats of R-G. K444 participates in a covalent cross-link: Glycyl lysine isopeptide (Lys-Gly) (interchain with G-Cter in SUMO2). T456 bears the Phosphothreonine mark. One can recognise a Tudor; atypical domain in the interval 460-559 (DYSLLPLLAA…ITVFWKELID (100 aa)). A phosphoserine mark is found at S487 and S489. K496 participates in a covalent cross-link: Glycyl lysine isopeptide (Lys-Gly) (interchain with G-Cter in SUMO2). The stretch at 517 to 520 (SLPA) is one 2-2 repeat. Residue S566 is modified to Phosphoserine.

Belongs to the coilin family. As to quaternary structure, interacts with ANKS1B. Interacts with SMN1 (via Tudor domain). Interacts (via C-terminus) with AK6. Interacts with WRAP53/TCAB1. Interacts with HMBOX1. Interacts with PSME3; the interaction is inhibited by PSME3IP1. Interacts wit UBL5. Post-translationally, symmetrical dimethylation of arginine residues within the RG repeat region enhances affinity for SMN, and thus localization of SMN complexes to CBs. Phosphorylated by VRK1. Phosphorylation during mitosis is associated with disassembly of CBs. As to expression, found in all the cell types examined.

The protein localises to the nucleus. Its subcellular location is the cajal body. Its function is as follows. Component of nuclear coiled bodies, also known as Cajal bodies or CBs, which are involved in the modification and assembly of nucleoplasmic snRNPs. The protein is Coilin (COIL) of Homo sapiens (Human).